The primary structure comprises 515 residues: Folate synthesis bifunctional protein, mitochondrial (515 aa).

A mitochondrion-targeting transit peptide spans M1–S28. The interval V47–L172 is HPPK. The Pterin-binding domain occupies T230–K498. A DHPS region spans residues V232–Q515. Residue N237 participates in Mg(2+) binding. Residues T277, D314, N333, D406, K451, and R486–H488 each bind (7,8-dihydropterin-6-yl)methyl diphosphate.

This sequence in the N-terminal section; belongs to the HPPK family. It in the C-terminal section; belongs to the DHPS family. In terms of assembly, homomultimer. The cofactor is Mg(2+).

The protein resides in the mitochondrion. It catalyses the reaction 6-hydroxymethyl-7,8-dihydropterin + ATP = (7,8-dihydropterin-6-yl)methyl diphosphate + AMP + H(+). The catalysed reaction is (7,8-dihydropterin-6-yl)methyl diphosphate + 4-aminobenzoate = 7,8-dihydropteroate + diphosphate. It participates in cofactor biosynthesis; tetrahydrofolate biosynthesis; 2-amino-4-hydroxy-6-hydroxymethyl-7,8-dihydropteridine diphosphate from 7,8-dihydroneopterin triphosphate: step 4/4. The protein operates within cofactor biosynthesis; tetrahydrofolate biosynthesis; 7,8-dihydrofolate from 2-amino-4-hydroxy-6-hydroxymethyl-7,8-dihydropteridine diphosphate and 4-aminobenzoate: step 1/2. Functionally, catalyzes the first two consecutive steps of tetrahydrofolate biosynthesis. In Pisum sativum (Garden pea), this protein is Folate synthesis bifunctional protein, mitochondrial.